Reading from the N-terminus, the 298-residue chain is Protein ILRUN (298 aa).

The disordered stretch occupies residues 199-277; the sequence is NTQPHRKVEG…SVNLSPSSHA (79 aa). Residues Ser-215 and Ser-222 each carry the phosphoserine modification. The segment covering 242–255 has biased composition (low complexity); the sequence is TWAPAPDTWAPAPD. Positions 262–277 are enriched in polar residues; sequence NRLSQNSVNLSPSSHA. Ser-272 bears the Phosphoserine mark.

Interacts with IRF3; the interaction inhibits IRF3 binding to its DNA consensus sequence. Expressed in lung (at protein level).

The protein resides in the cytoplasm. It is found in the nucleus. Negative regulator of innate antiviral response. Blocks IRF3-dependent cytokine production such as IFNA, IFNB and TNF. Interacts with IRF3 and inhibits IRF3 recruitment to type I IFN promoter sequences while also reducing nuclear levels of the coactivators EP300 and CREBBP. The chain is Protein ILRUN from Homo sapiens (Human).